A 200-amino-acid polypeptide reads, in one-letter code: 3-isopropylmalate dehydratase small subunit (200 aa).

This sequence belongs to the LeuD family. LeuD type 1 subfamily. In terms of assembly, heterodimer of LeuC and LeuD.

The catalysed reaction is (2R,3S)-3-isopropylmalate = (2S)-2-isopropylmalate. It functions in the pathway amino-acid biosynthesis; L-leucine biosynthesis; L-leucine from 3-methyl-2-oxobutanoate: step 2/4. Its function is as follows. Catalyzes the isomerization between 2-isopropylmalate and 3-isopropylmalate, via the formation of 2-isopropylmaleate. The chain is 3-isopropylmalate dehydratase small subunit from Proteus mirabilis (strain HI4320).